The chain runs to 127 residues: Large ribosomal subunit protein bL21 (127 aa).

It belongs to the bacterial ribosomal protein bL21 family. As to quaternary structure, part of the 50S ribosomal subunit. Contacts protein L20.

In terms of biological role, this protein binds to 23S rRNA in the presence of protein L20. This chain is Large ribosomal subunit protein bL21, found in Synechococcus elongatus (strain ATCC 33912 / PCC 7942 / FACHB-805) (Anacystis nidulans R2).